We begin with the raw amino-acid sequence, 142 residues long: FAD synthase (142 aa).

ATP contacts are provided by residues 9-10, 14-17, and D92; these read TF and HPGH.

This sequence belongs to the archaeal FAD synthase family. In terms of assembly, homodimer. The cofactor is a divalent metal cation.

It carries out the reaction FMN + ATP + H(+) = FAD + diphosphate. It participates in cofactor biosynthesis; FAD biosynthesis; FAD from FMN: step 1/1. Catalyzes the transfer of the AMP portion of ATP to flavin mononucleotide (FMN) to produce flavin adenine dinucleotide (FAD) coenzyme. The polypeptide is FAD synthase (Haloferax volcanii (strain ATCC 29605 / DSM 3757 / JCM 8879 / NBRC 14742 / NCIMB 2012 / VKM B-1768 / DS2) (Halobacterium volcanii)).